The primary structure comprises 530 residues: Bifunctional purine biosynthesis protein PurH (530 aa).

Residues 1–148 (MEQARPIRRA…KNHKDVAIVV (148 aa)) form the MGS-like domain.

It belongs to the PurH family.

It catalyses the reaction (6R)-10-formyltetrahydrofolate + 5-amino-1-(5-phospho-beta-D-ribosyl)imidazole-4-carboxamide = 5-formamido-1-(5-phospho-D-ribosyl)imidazole-4-carboxamide + (6S)-5,6,7,8-tetrahydrofolate. It carries out the reaction IMP + H2O = 5-formamido-1-(5-phospho-D-ribosyl)imidazole-4-carboxamide. Its pathway is purine metabolism; IMP biosynthesis via de novo pathway; 5-formamido-1-(5-phospho-D-ribosyl)imidazole-4-carboxamide from 5-amino-1-(5-phospho-D-ribosyl)imidazole-4-carboxamide (10-formyl THF route): step 1/1. The protein operates within purine metabolism; IMP biosynthesis via de novo pathway; IMP from 5-formamido-1-(5-phospho-D-ribosyl)imidazole-4-carboxamide: step 1/1. The chain is Bifunctional purine biosynthesis protein PurH from Aeromonas salmonicida (strain A449).